A 1097-amino-acid polypeptide reads, in one-letter code: U3 small nucleolar RNA-associated protein 22 (1097 aa).

Composition is skewed to basic and acidic residues over residues 1–10 (MNGLKREHES) and 18–27 (KTPETEYDSH). A disordered region spans residues 1–27 (MNGLKREHESSSSQDGSKTPETEYDSH).

The protein belongs to the NRAP family. As to quaternary structure, component of the ribosomal small subunit (SSU) processome.

It localises to the nucleus. It is found in the nucleolus. Its function is as follows. Involved in nucleolar processing of pre-18S ribosomal RNA and ribosome assembly. The protein is U3 small nucleolar RNA-associated protein 22 of Schizosaccharomyces pombe (strain 972 / ATCC 24843) (Fission yeast).